Consider the following 107-residue polypeptide: uncharacterized protein (107 aa).

3 helical membrane-spanning segments follow: residues 20 to 40, 49 to 69, and 86 to 106; these read FISL…EVGI, PAIL…ISTV, and VVML…KLFL.

The protein resides in the membrane. This is an uncharacterized protein from Saccharomyces cerevisiae (strain ATCC 204508 / S288c) (Baker's yeast).